The chain runs to 352 residues: [Citrate [pro-3S]-lyase] ligase (352 aa).

The 128-residue stretch at methionine 1–threonine 128 folds into the N-acetyltransferase domain.

It catalyses the reaction holo-[citrate lyase ACP] + acetate + ATP = acetyl-[citrate lyase ACP] + AMP + diphosphate. Acetylation of prosthetic group (2-(5''-phosphoribosyl)-3'-dephosphocoenzyme-A) of the gamma subunit of citrate lyase. The polypeptide is [Citrate [pro-3S]-lyase] ligase (citC) (Escherichia coli (strain K12)).